The chain runs to 183 residues: Ribosome-recycling factor (183 aa).

The protein belongs to the RRF family.

It localises to the cytoplasm. Functionally, responsible for the release of ribosomes from messenger RNA at the termination of protein biosynthesis. May increase the efficiency of translation by recycling ribosomes from one round of translation to another. The sequence is that of Ribosome-recycling factor from Bifidobacterium longum (strain DJO10A).